Reading from the N-terminus, the 333-residue chain is Adenosine deaminase (333 aa).

2 residues coordinate Zn(2+): H12 and H14. Residues H14, D16, and G170 each contribute to the substrate site. A Zn(2+)-binding site is contributed by H197. E200 (proton donor) is an active-site residue. Zn(2+) is bound at residue D278. Substrate is bound at residue D279.

It belongs to the metallo-dependent hydrolases superfamily. Adenosine and AMP deaminases family. Adenosine deaminase subfamily. It depends on Zn(2+) as a cofactor.

It catalyses the reaction adenosine + H2O + H(+) = inosine + NH4(+). The catalysed reaction is 2'-deoxyadenosine + H2O + H(+) = 2'-deoxyinosine + NH4(+). Its function is as follows. Catalyzes the hydrolytic deamination of adenosine and 2-deoxyadenosine. This Escherichia coli O139:H28 (strain E24377A / ETEC) protein is Adenosine deaminase.